The following is a 291-amino-acid chain: uncharacterized protein (291 aa).

To E.cuniculi ECU03_0120.

This is an uncharacterized protein from Encephalitozoon cuniculi (strain GB-M1) (Microsporidian parasite).